The following is a 118-amino-acid chain: Beta-2-microglobulin (118 aa).

Residues 1–20 form the signal peptide; it reads MARVVALVLLGLLSLTGLEA. One can recognise an Ig-like C1-type domain in the interval 25–111; sequence PKVQVYSRHP…QHSTLKEPLI (87 aa). Residues cysteine 45 and cysteine 99 are joined by a disulfide bond.

The protein belongs to the beta-2-microglobulin family. As to quaternary structure, heterodimer of an alpha chain and a beta chain. Beta-2-microglobulin is the beta-chain of major histocompatibility complex class I molecules.

It localises to the secreted. In terms of biological role, component of the class I major histocompatibility complex (MHC). Involved in the presentation of peptide antigens to the immune system. This chain is Beta-2-microglobulin (B2M), found in Equus asinus (Donkey).